The chain runs to 629 residues: Glycerol-3-phosphate dehydrogenase SDP6, mitochondrial (629 aa).

The transit peptide at 1–48 directs the protein to the mitochondrion; sequence MSLASIRRLAAGAAVIAAASGGAVYLSPSVASSDKGGGPILDSLRRRL. Residue 75-103 participates in FAD binding; it reads DVLVIGGGATGSGVALDAVTRGLRVGLVE.

The protein belongs to the FAD-dependent glycerol-3-phosphate dehydrogenase family. FAD serves as cofactor. In terms of tissue distribution, expressed in germinating seedlings. Also detected in roots, leaves, flowers, developing siliques and germinating seeds.

The protein resides in the mitochondrion inner membrane. It catalyses the reaction a quinone + sn-glycerol 3-phosphate = dihydroxyacetone phosphate + a quinol. Its pathway is polyol metabolism; glycerol degradation via glycerol kinase pathway; glycerone phosphate from sn-glycerol 3-phosphate (anaerobic route): step 1/1. In terms of biological role, required for glycerol catabolism and involved in NADH/NAD(+) homeostasis. Essential for postgerminative growth and seedling establishment. The chain is Glycerol-3-phosphate dehydrogenase SDP6, mitochondrial from Arabidopsis thaliana (Mouse-ear cress).